We begin with the raw amino-acid sequence, 535 residues long: Doublesex- and mab-3-related transcription factor A2 (535 aa).

The segment at residues 69-116 (CARCRNHGVVSALKGHKRYCRWKDCLCAKCTLIAERQRVMAAQVALRR) is a DNA-binding region (DM). The segment at 200–315 (LQAGRPGSPQ…GGPGPRQRTP (116 aa)) is disordered. The DMA domain occupies 313–348 (RTPLDILTRVFPGHRRGVLELVLQGCGGDVVQAIEQ).

This sequence belongs to the DMRT family.

Its subcellular location is the nucleus. In terms of biological role, may be involved in sexual development. In Bos taurus (Bovine), this protein is Doublesex- and mab-3-related transcription factor A2 (DMRTA2).